A 148-amino-acid polypeptide reads, in one-letter code: Small ribosomal subunit protein uS13 (148 aa).

It belongs to the universal ribosomal protein uS13 family. In terms of assembly, part of the 30S ribosomal subunit. Forms a loose heterodimer with protein S19. Forms two bridges to the 50S subunit in the 70S ribosome.

Located at the top of the head of the 30S subunit, it contacts several helices of the 16S rRNA. In the 70S ribosome it contacts the 23S rRNA (bridge B1a) and protein L5 of the 50S subunit (bridge B1b), connecting the 2 subunits; these bridges are implicated in subunit movement. The chain is Small ribosomal subunit protein uS13 from Pyrococcus abyssi (strain GE5 / Orsay).